Reading from the N-terminus, the 299-residue chain is tRNA pseudouridine synthase A (299 aa).

The active-site Nucleophile is the Asp67. Residue Tyr125 coordinates substrate.

The protein belongs to the tRNA pseudouridine synthase TruA family. As to quaternary structure, homodimer.

The enzyme catalyses uridine(38/39/40) in tRNA = pseudouridine(38/39/40) in tRNA. Formation of pseudouridine at positions 38, 39 and 40 in the anticodon stem and loop of transfer RNAs. The sequence is that of tRNA pseudouridine synthase A from Parasynechococcus marenigrum (strain WH8102).